The sequence spans 693 residues: Polyribonucleotide nucleotidyltransferase (693 aa).

Asp490 and Asp496 together coordinate Mg(2+). The region spanning 557 to 617 (PRISWFFIDP…EKVQEAVEYI (61 aa)) is the KH domain. One can recognise an S1 motif domain in the interval 627–691 (GDLYTGKVTR…DAGRLQFRRL (65 aa)).

The protein belongs to the polyribonucleotide nucleotidyltransferase family. The cofactor is Mg(2+).

It is found in the cytoplasm. The enzyme catalyses RNA(n+1) + phosphate = RNA(n) + a ribonucleoside 5'-diphosphate. Its function is as follows. Involved in mRNA degradation. Catalyzes the phosphorolysis of single-stranded polyribonucleotides processively in the 3'- to 5'-direction. The chain is Polyribonucleotide nucleotidyltransferase from Fervidobacterium nodosum (strain ATCC 35602 / DSM 5306 / Rt17-B1).